The following is a 406-amino-acid chain: chitinase-like effector (406 aa).

The first 23 residues, M1 to A23, serve as a signal peptide directing secretion. The region spanning A26 to K405 is the GH18 domain. 2 residues coordinate chitin: Y138 and W384.

Belongs to the glycosyl hydrolase 18 family.

Its subcellular location is the secreted. Its function is as follows. Catalytically impaired chitinase that binds efficiently to chitin, but not to chitosan, xylan, or cellulose. Despite the lack of chitinolytic activity, retains substrate binding specificity and acts as an effector to prevent chitin-triggered immunity by sequestering immunogenic chitin fragments. This is chitinase-like effector (Chi) from Moniliophthora roreri (Frosty pod rot fungus).